The primary structure comprises 719 residues: Photosystem I P700 chlorophyll a apoprotein A1 (719 aa).

Transmembrane regions (helical) follow at residues 59-82 (VFSA…FHGA), 145-168 (LYCT…FHYH), 184-208 (LNHH…HVSL), 280-298 (TAHH…GHMY), 335-358 (WHAQ…HHMY), 374-400 (LSLF…IFMV), 422-444 (AIVS…LYIH), and 520-538 (FLVH…LILL). [4Fe-4S] cluster is bound by residues cysteine 562 and cysteine 571. Transmembrane regions (helical) follow at residues 578-599 (HVFL…HFSW) and 653-675 (LSAY…MFLF). Residue histidine 664 participates in chlorophyll a' binding. The chlorophyll a site is built by methionine 672 and tyrosine 680. Tryptophan 681 is a binding site for phylloquinone. A helical transmembrane segment spans residues 713–719 (AVGVAHY).

The protein belongs to the PsaA/PsaB family. In terms of assembly, the PsaA/B heterodimer binds the P700 chlorophyll special pair and subsequent electron acceptors. PSI consists of a core antenna complex that captures photons, and an electron transfer chain that converts photonic excitation into a charge separation. The eukaryotic PSI reaction center is composed of at least 11 subunits. P700 is a chlorophyll a/chlorophyll a' dimer, A0 is one or more chlorophyll a, A1 is one or both phylloquinones and FX is a shared 4Fe-4S iron-sulfur center. serves as cofactor.

Its subcellular location is the plastid. The protein localises to the chloroplast thylakoid membrane. It catalyses the reaction reduced [plastocyanin] + hnu + oxidized [2Fe-2S]-[ferredoxin] = oxidized [plastocyanin] + reduced [2Fe-2S]-[ferredoxin]. In terms of biological role, psaA and PsaB bind P700, the primary electron donor of photosystem I (PSI), as well as the electron acceptors A0, A1 and FX. PSI is a plastocyanin-ferredoxin oxidoreductase, converting photonic excitation into a charge separation, which transfers an electron from the donor P700 chlorophyll pair to the spectroscopically characterized acceptors A0, A1, FX, FA and FB in turn. Oxidized P700 is reduced on the lumenal side of the thylakoid membrane by plastocyanin. This is Photosystem I P700 chlorophyll a apoprotein A1 from Encephalartos lebomboensis (Lebombo cycad).